A 691-amino-acid polypeptide reads, in one-letter code: Seven transmembrane domain-containing tyrosine-protein kinase 1 (691 aa).

Residues 1–33 lie on the Extracellular side of the membrane; sequence MDTSCVSINQCGFCTYLFNRSIPLAGEGDGAIM. Residues 34–54 form a helical membrane-spanning segment; the sequence is FNTMVDSMALGYIFSALYLLF. Over 55–126 the chain is Cytoplasmic; it reads RLQRSYTYLQ…PRIINSTYFK (72 aa). Residues 127-144 traverse the membrane as a helical segment; the sequence is YTLFVSLWLAFEGLLLLF. The Extracellular segment spans residues 145 to 153; that stretch reads LPPNSLAYP. The chain crosses the membrane as a helical span at residues 154-176; sequence AFVIIVGTGHIVTDNWVLVFLYG. Residues 177–186 are Cytoplasmic-facing; it reads KEDDRFSARR. Residues 187–207 form a helical membrane-spanning segment; the sequence is SFYSCTLLYLIICCTTLASFF. Residues 208–227 lie on the Extracellular side of the membrane; sequence DDQTMCKKNDCQTFMFQDEY. A helical transmembrane segment spans residues 228 to 248; sequence TSLAITVASLVVYTIVLGMTI. Residues 249-258 lie on the Cytoplasmic side of the membrane; that stretch reads KRSFLRPTGR. The helical transmembrane segment at 259 to 279 threads the bilayer; the sequence is IWLLFLMGYNCISSVGALLNI. The Extracellular portion of the chain corresponds to 280-284; the sequence is LDVDA. Residues 285-305 form a helical membrane-spanning segment; the sequence is GYCFLGIAAIIYSFSYGPLLF. The Cytoplasmic segment spans residues 306 to 691; sequence RTCGNDTNLL…GAEEFHYIDG (386 aa). In terms of domain architecture, Protein kinase spans 363-634; sequence FKFGQVIGEG…ANVPISNTYV (272 aa). Residues 369–377 and Lys390 each bind ATP; that span reads IGEGYFGEV. Asp493 serves as the catalytic Proton acceptor.

It belongs to the protein kinase superfamily. TKL Tyr protein kinase family.

It localises to the membrane. The catalysed reaction is L-tyrosyl-[protein] + ATP = O-phospho-L-tyrosyl-[protein] + ADP + H(+). This chain is Seven transmembrane domain-containing tyrosine-protein kinase 1 (7tmk1), found in Dictyostelium discoideum (Social amoeba).